A 161-amino-acid polypeptide reads, in one-letter code: Periplasmic chaperone Spy (161 aa).

Positions 1 to 23 are cleaved as a signal peptide; the sequence is MRKLTALFVASTLALGAANLAHA. Positions 140–161 are disordered; sequence ANFEKRLTERPAAKGKMPATAE. Basic and acidic residues predominate over residues 142 to 151; sequence FEKRLTERPA.

Belongs to the CpxP/Spy family. Homodimer.

The protein resides in the periplasm. Functionally, an ATP-independent periplasmic chaperone, decreases protein aggregation and helps protein refolding. Binds substrate over a large region of its convex inner surface. Substrate protein folds while it is bound to chaperone. Increasing Spy flexibility increases its substrate affinity and overall chaperone activity (shown for 3 different substrates). Protects proteins in vitro against tannin inactivation; tannins have antimicrobial activity. Overexpression enhances the stability of otherwise unstable periplasmic proteins. This Escherichia coli (strain K12) protein is Periplasmic chaperone Spy.